The chain runs to 581 residues: Solute carrier family 15 member 3 (581 aa).

Residues 1–14 (MPAPRAREQPRVPG) show a composition bias toward basic and acidic residues. The tract at residues 1-26 (MPAPRAREQPRVPGERQPLLPRGARG) is disordered. A helical membrane pass occupies residues 38–58 (VLLVEMLERAAFFGVTANLVL). Residues N61 and N66 are each glycosylated (N-linked (GlcNAc...) asparagine). 3 helical membrane passes run 76–96 (ALVFLGASYLLAPVGGWLADV), 103–123 (AVALSLLLYLAASGLLPATAF), and 155–175 (PYCAPVLYAGLLLLGLAASSV). A glycan (N-linked (GlcNAc...) asparagine) is linked at N178. Residues 200–220 (NWFYWSINLGAVLSLLVVAFI) traverse the membrane as a helical segment. N223 carries N-linked (GlcNAc...) asparagine glycosylation. A run of 2 helical transmembrane segments spans residues 232 to 252 (IPVGCVGLAFFIFLFATPVFI) and 310 to 330 (FQVLVKILPVMVTLVPYWMVY). N-linked (GlcNAc...) asparagine glycosylation occurs at N356. 2 helical membrane passes run 369-389 (TIPEAWLLLANVVVVLILVPL) and 411-431 (MALGMFFGFTSVIVAGVLEME). Residue N439 is glycosylated (N-linked (GlcNAc...) asparagine). The next 3 membrane-spanning stretches (helical) occupy residues 458–478 (IWWQIPQYLLIGISEIFASIP), 497–517 (GIFFCLSGVGSLLGSSLVALL), and 540–560 (LYFFLLAGIQAVTALLFVWIA).

This sequence belongs to the major facilitator superfamily. Proton-dependent oligopeptide transporter (POT/PTR) (TC 2.A.17) family.

It localises to the lysosome membrane. Its subcellular location is the endosome membrane. The enzyme catalyses glycylglycylglycine(out) + n H(+)(out) = glycylglycylglycine(in) + n H(+)(in). It catalyses the reaction carnosine(out) + n H(+)(out) = carnosine(in) + n H(+)(in). The catalysed reaction is L-histidine(out) + n H(+)(out) = L-histidine(in) + n H(+)(in). It carries out the reaction N-acetyl-D-muramoyl-L-alanyl-D-isoglutamine(out) + n H(+)(out) = N-acetyl-D-muramoyl-L-alanyl-D-isoglutamine(in) + n H(+)(in). Proton-coupled amino-acid transporter that transports free histidine and certain di- and tripeptides, and is involved in innate immune response. Also able to transport carnosine. Involved in the detection of microbial pathogens by toll-like receptors (TLRs) and NOD-like receptors (NLRs), probably by mediating transport of bacterial peptidoglycans across the endolysosomal membrane: catalyzes the transport of certain bacterial peptidoglycans, such as muramyl dipeptide (MDP), the NOD2 ligand. The protein is Solute carrier family 15 member 3 of Homo sapiens (Human).